A 665-amino-acid chain; its full sequence is Intraflagellar transport protein 70A (665 aa).

TPR repeat units follow at residues 11–44 (DGEFTALVYRLIRDARYAEAVQLLGRELQRSPRS), 45–78 (RAGLSLLGYCYYRLQEFALAAECYEQLGQLHPEL), 154–187 (TDGQVNLGCLLYKEGQYEAACSKFSATLQASGYQ), 189–221 (DLSYNLALAYYSSRQYASALKHIAEIIERGIRQ), 393–424 (LTKQVQEARHNRDDEAIKKAVNEYDETMEKYI), 425–457 (PVLMAQAKIYWNLENYPMVEKVFRKSVEFCNDH), and 459–492 (VWKLNVAHVLFMQENKYKEAIGFYEPIVKKHYDN). Residues 508 to 535 (YIMTSQNEEAEELMRKIEKEEEQLSYDD) are a coiled coil. The TPR 8 repeat unit spans residues 544 to 577 (CIVNLVIGTLYCAKGNYEFGISRVIKSLEPYNKK).

It belongs to the TTC30/dfy-1/fleer family.

It localises to the cell projection. Its subcellular location is the cilium. In terms of biological role, required for polyglutamylation of axonemal tubulin. Plays a role in anterograde intraflagellar transport (IFT), the process by which cilia precursors are transported from the base of the cilium to the site of their incorporation at the tip. This chain is Intraflagellar transport protein 70A, found in Homo sapiens (Human).